A 128-amino-acid polypeptide reads, in one-letter code: Large ribosomal subunit protein bL12 (128 aa).

The protein belongs to the bacterial ribosomal protein bL12 family. Homodimer. Part of the ribosomal stalk of the 50S ribosomal subunit. Forms a multimeric L10(L12)X complex, where L10 forms an elongated spine to which 2 to 4 L12 dimers bind in a sequential fashion. Binds GTP-bound translation factors.

Forms part of the ribosomal stalk which helps the ribosome interact with GTP-bound translation factors. Is thus essential for accurate translation. The polypeptide is Large ribosomal subunit protein bL12 (Sorangium cellulosum (strain So ce56) (Polyangium cellulosum (strain So ce56))).